The sequence spans 139 residues: Nucleoside diphosphate kinase (139 aa).

K11, F59, R87, T93, R104, and N114 together coordinate ATP. H117 acts as the Pros-phosphohistidine intermediate in catalysis.

It belongs to the NDK family. As to quaternary structure, homotetramer. It depends on Mg(2+) as a cofactor.

Its subcellular location is the cytoplasm. The enzyme catalyses a 2'-deoxyribonucleoside 5'-diphosphate + ATP = a 2'-deoxyribonucleoside 5'-triphosphate + ADP. It carries out the reaction a ribonucleoside 5'-diphosphate + ATP = a ribonucleoside 5'-triphosphate + ADP. Its function is as follows. Major role in the synthesis of nucleoside triphosphates other than ATP. The ATP gamma phosphate is transferred to the NDP beta phosphate via a ping-pong mechanism, using a phosphorylated active-site intermediate. This chain is Nucleoside diphosphate kinase, found in Pasteurella multocida (strain Pm70).